Consider the following 365-residue polypeptide: Chorismate synthase (365 aa).

The NADP(+) site is built by Arg48 and Arg54. FMN-binding positions include 129–131 (RSS), 241–242 (NA), Gly285, 300–304 (KPTSS), and Arg326.

Belongs to the chorismate synthase family. Homotetramer. FMNH2 serves as cofactor.

It carries out the reaction 5-O-(1-carboxyvinyl)-3-phosphoshikimate = chorismate + phosphate. The protein operates within metabolic intermediate biosynthesis; chorismate biosynthesis; chorismate from D-erythrose 4-phosphate and phosphoenolpyruvate: step 7/7. Catalyzes the anti-1,4-elimination of the C-3 phosphate and the C-6 proR hydrogen from 5-enolpyruvylshikimate-3-phosphate (EPSP) to yield chorismate, which is the branch point compound that serves as the starting substrate for the three terminal pathways of aromatic amino acid biosynthesis. This reaction introduces a second double bond into the aromatic ring system. The polypeptide is Chorismate synthase (Parvibaculum lavamentivorans (strain DS-1 / DSM 13023 / NCIMB 13966)).